Here is a 176-residue protein sequence, read N- to C-terminus: Peptide methionine sulfoxide reductase MsrA (176 aa).

Residue cysteine 12 is part of the active site.

This sequence belongs to the MsrA Met sulfoxide reductase family.

It carries out the reaction L-methionyl-[protein] + [thioredoxin]-disulfide + H2O = L-methionyl-(S)-S-oxide-[protein] + [thioredoxin]-dithiol. It catalyses the reaction [thioredoxin]-disulfide + L-methionine + H2O = L-methionine (S)-S-oxide + [thioredoxin]-dithiol. In terms of biological role, has an important function as a repair enzyme for proteins that have been inactivated by oxidation. Catalyzes the reversible oxidation-reduction of methionine sulfoxide in proteins to methionine. The polypeptide is Peptide methionine sulfoxide reductase MsrA (Thermus thermophilus (strain ATCC BAA-163 / DSM 7039 / HB27)).